Here is a 403-residue protein sequence, read N- to C-terminus: S-adenosylmethionine synthase (403 aa).

ATP is bound at residue 140 to 145 (GKGSTD).

This sequence belongs to the AdoMet synthase 2 family. Mg(2+) serves as cofactor.

It catalyses the reaction L-methionine + ATP + H2O = S-adenosyl-L-methionine + phosphate + diphosphate. Its pathway is amino-acid biosynthesis; S-adenosyl-L-methionine biosynthesis; S-adenosyl-L-methionine from L-methionine: step 1/1. Catalyzes the formation of S-adenosylmethionine from methionine and ATP. This is S-adenosylmethionine synthase from Sulfolobus acidocaldarius (strain ATCC 33909 / DSM 639 / JCM 8929 / NBRC 15157 / NCIMB 11770).